We begin with the raw amino-acid sequence, 1100 residues long: MALLGIKLMTLVFAAWLSCCHSSSALPSSGLSGPCLNHSCLLRNSLNGASQWGTILHSPAVGSNCPPCPMMSIMGCSPPKPLQSNSYGVLCSTIASKAKQDLKLCWKEVQTRSEMYSKRISAALIDSLHQAVGMLLMIIIWIWSSIFLVVYHVLAYMTTYHLSSAVCVGFLIFCTICAFRLISWICGDLLAFNVSGLTPIWVNFSESSCPAGLSLRRYKNEKTVEGYKPFIIPQKSPKKSVIELSFSNGSHLGYATCVRLWDGSICLMTAKHCLVKEALLKGRVAGHSLPVKNFDLFLTCDEIDFSLLRGPKQWEAYLGVKGADLITSNRIGRSPVTFYNLSKDGEWLANSAQITGRHGKLCSVLSNTSPGDSGTPYYSGKNVVGIHKGTSELENYNLMIPIPNIPGLTSPDFKFETTNVRGNLYNDEGFRLSVGEDDKAEHWTDRLMKSITFKTKRWADWAEEESESDDERGKVVPPAKPSNYGEGCPPEHNQYLSDVGDLLTKVIGPEQNEKCVDILMGIMGVDKNEVAPHKEEKAEKGKRSSGFGHGKNRKGTNHPMRRGYNFRNCKKGGGQDESESHREISGRDPGRESNDKSPQGEAEEFERYFSSFYSWKLHNSGEANSGFRPCGKIPKFYRPRKRRVSEWGQNLARKHSSLGEITQGFGWPEAGAEAELRSLRLQAQRWLERSKSSVIPSAIEREIVISRLVESYKICRSEAPLCSSGSDLSWKGFLEDFREAVSSLELDAGIGVPYIGYGYPTHRGWVENPRLLPVLSRLVYARLQRLATLSVDGKTPEELVRDGLVDPVRVFVKGEPHKQSKLDEGRYRLIMSVSLIDQLVARVLFQKQNKLELLLWRSIPSKPGFGLSTVEQVEEFIDHLARVVDVKSDDLLENWRELMVPTDCSGFDWSVSDWMLKDEMEVRNRLTINCNDLTRRLRNSWLYCLSNSDLALSDGSLLAQEVPGVQKSGSYNTSSTNSRIRVMAAYFAGASWAVAIGDDALESIDTTLAVYKSLGFKVEVSEDLEFCSHIFKTRSLAIPVNTSKMLYRLIYGYEPECGNLDVLRNYLCALASVLHELRHDQDLVQNLSKWLIPDGSQKIS.

The signal sequence occupies residues 1-25 (MALLGIKLMTLVFAAWLSCCHSSSA). 2 helical membrane-spanning segments follow: residues 131–151 (AVGM…LVVY) and 165–185 (AVCV…ISWI). The Peptidase S39 domain occupies 224-416 (VEGYKPFIIP…GLTSPDFKFE (193 aa)). Active-site for protease activity residues include His272, Asp304, and Ser373. Disordered regions lie at residues 463–493 (EEES…PEHN) and 530–601 (VAPH…PQGE). Basic and acidic residues predominate over residues 530–542 (VAPHKEEKAEKGK). Positions 550 to 561 (GKNRKGTNHPMR) are enriched in basic residues. The span at 578-595 (SESHREISGRDPGRESND) shows a compositional bias: basic and acidic residues. Positions 897-1012 (ELMVPTDCSG…SIDTTLAVYK (116 aa)) constitute a RdRp catalytic domain.

It belongs to the ssRNA positive-strand viruses RNA-directed RNA polymerase family.

It is found in the host membrane. It carries out the reaction RNA(n) + a ribonucleoside 5'-triphosphate = RNA(n+1) + diphosphate. Its function is as follows. Precursor from which the RNA-dependent RNA polymerase (RdRp) is probably released. RNA-dependent RNA polymerase plays an essential role in virus replication (Potential). RNA-dependent RNA polymerase replicates the viral genome. This Poinsettia latent virus (isolate Euphorbia pulcherrima/Germany/Siepen/2005) (PnLV) protein is Protein P2-P3.